We begin with the raw amino-acid sequence, 313 residues long: Glutaminase (313 aa).

Residues Ser-64, Asn-116, Glu-163, Asn-170, Tyr-194, Tyr-246, and Val-264 each coordinate substrate.

The protein belongs to the glutaminase family. As to quaternary structure, homotetramer.

It catalyses the reaction L-glutamine + H2O = L-glutamate + NH4(+). The protein is Glutaminase of Exiguobacterium sp. (strain ATCC BAA-1283 / AT1b).